The primary structure comprises 653 residues: Threonine--tRNA ligase (653 aa).

Positions Met1–Lys61 constitute a TGS domain. Positions Asp243–Pro542 are catalytic. 3 residues coordinate Zn(2+): Cys338, His389, and His519.

The protein belongs to the class-II aminoacyl-tRNA synthetase family. As to quaternary structure, homodimer. Requires Zn(2+) as cofactor.

The protein localises to the cytoplasm. It catalyses the reaction tRNA(Thr) + L-threonine + ATP = L-threonyl-tRNA(Thr) + AMP + diphosphate + H(+). Its function is as follows. Catalyzes the attachment of threonine to tRNA(Thr) in a two-step reaction: L-threonine is first activated by ATP to form Thr-AMP and then transferred to the acceptor end of tRNA(Thr). Also edits incorrectly charged L-seryl-tRNA(Thr). This chain is Threonine--tRNA ligase, found in Porphyromonas gingivalis (strain ATCC 33277 / DSM 20709 / CIP 103683 / JCM 12257 / NCTC 11834 / 2561).